An 824-amino-acid chain; its full sequence is Leucine--tRNA ligase (824 aa).

Residues 40-50 carry the 'HIGH' region motif; it reads PYPSGKIHMGH. The 'KMSKS' region motif lies at 580-584; it reads KMSKS. An ATP-binding site is contributed by Lys-583.

The protein belongs to the class-I aminoacyl-tRNA synthetase family.

Its subcellular location is the cytoplasm. The catalysed reaction is tRNA(Leu) + L-leucine + ATP = L-leucyl-tRNA(Leu) + AMP + diphosphate. The sequence is that of Leucine--tRNA ligase from Alkaliphilus metalliredigens (strain QYMF).